A 430-amino-acid chain; its full sequence is Lipoyl synthase, mitochondrial (430 aa).

The transit peptide at 1–37 (MAASTGKLRTLFSAHSSLSARPSSALPALRLTILRSY) directs the protein to the mitochondrion. A compositionally biased stretch (low complexity) spans 40–56 (TTPPDSSISDPSNSSTT). The segment at 40 to 63 (TTPPDSSISDPSNSSTTVKRPPTA) is disordered. Positions 141, 146, 152, 172, 176, 179, and 387 each coordinate [4Fe-4S] cluster. In terms of domain architecture, Radical SAM core spans 155 to 376 (GSSKSAATAT…KERALEMGFL (222 aa)).

This sequence belongs to the radical SAM superfamily. Lipoyl synthase family. The cofactor is [4Fe-4S] cluster.

The protein localises to the mitochondrion. The enzyme catalyses [[Fe-S] cluster scaffold protein carrying a second [4Fe-4S](2+) cluster] + N(6)-octanoyl-L-lysyl-[protein] + 2 oxidized [2Fe-2S]-[ferredoxin] + 2 S-adenosyl-L-methionine + 4 H(+) = [[Fe-S] cluster scaffold protein] + N(6)-[(R)-dihydrolipoyl]-L-lysyl-[protein] + 4 Fe(3+) + 2 hydrogen sulfide + 2 5'-deoxyadenosine + 2 L-methionine + 2 reduced [2Fe-2S]-[ferredoxin]. It participates in protein modification; protein lipoylation via endogenous pathway; protein N(6)-(lipoyl)lysine from octanoyl-[acyl-carrier-protein]: step 2/2. Its function is as follows. Catalyzes the radical-mediated insertion of two sulfur atoms into the C-6 and C-8 positions of the octanoyl moiety bound to the lipoyl domains of lipoate-dependent enzymes, thereby converting the octanoylated domains into lipoylated derivatives. This is Lipoyl synthase, mitochondrial from Ajellomyces dermatitidis (strain ER-3 / ATCC MYA-2586) (Blastomyces dermatitidis).